Here is a 452-residue protein sequence, read N- to C-terminus: Probable carboxypeptidase ACLA_088580 (452 aa).

Positions 1–18 are cleaved as a signal peptide; the sequence is MRSLTLLLSLSTALRSVA. N-linked (GlcNAc...) asparagine glycans are attached at residues Asn107 and Asn156. Asp175 is a binding site for Zn(2+). Catalysis depends on Glu207, which acts as the Proton acceptor. Residue Glu208 coordinates Zn(2+).

This sequence belongs to the peptidase M20A family. Zn(2+) is required as a cofactor.

It localises to the secreted. In Aspergillus clavatus (strain ATCC 1007 / CBS 513.65 / DSM 816 / NCTC 3887 / NRRL 1 / QM 1276 / 107), this protein is Probable carboxypeptidase ACLA_088580.